Here is a 300-residue protein sequence, read N- to C-terminus: 33 kDa chaperonin (300 aa).

Disulfide bonds link Cys235/Cys237 and Cys269/Cys272.

It belongs to the HSP33 family. Post-translationally, under oxidizing conditions two disulfide bonds are formed involving the reactive cysteines. Under reducing conditions zinc is bound to the reactive cysteines and the protein is inactive.

It is found in the cytoplasm. Functionally, redox regulated molecular chaperone. Protects both thermally unfolding and oxidatively damaged proteins from irreversible aggregation. Plays an important role in the bacterial defense system toward oxidative stress. This is 33 kDa chaperonin from Pseudomonas syringae pv. tomato (strain ATCC BAA-871 / DC3000).